A 207-amino-acid polypeptide reads, in one-letter code: Thiamine-phosphate synthase (207 aa).

Residues 36–40 and Asp68 each bind 4-amino-2-methyl-5-(diphosphooxymethyl)pyrimidine; that span reads QLRIK. Mg(2+) contacts are provided by Asp69 and Asp88. Ser106 is a 4-amino-2-methyl-5-(diphosphooxymethyl)pyrimidine binding site. 132–134 lines the 2-[(2R,5Z)-2-carboxy-4-methylthiazol-5(2H)-ylidene]ethyl phosphate pocket; sequence TQT. Residue Lys135 coordinates 4-amino-2-methyl-5-(diphosphooxymethyl)pyrimidine. 2-[(2R,5Z)-2-carboxy-4-methylthiazol-5(2H)-ylidene]ethyl phosphate contacts are provided by residues Gly162 and 182-183; that span reads VS.

The protein belongs to the thiamine-phosphate synthase family. It depends on Mg(2+) as a cofactor.

The catalysed reaction is 2-[(2R,5Z)-2-carboxy-4-methylthiazol-5(2H)-ylidene]ethyl phosphate + 4-amino-2-methyl-5-(diphosphooxymethyl)pyrimidine + 2 H(+) = thiamine phosphate + CO2 + diphosphate. It carries out the reaction 2-(2-carboxy-4-methylthiazol-5-yl)ethyl phosphate + 4-amino-2-methyl-5-(diphosphooxymethyl)pyrimidine + 2 H(+) = thiamine phosphate + CO2 + diphosphate. It catalyses the reaction 4-methyl-5-(2-phosphooxyethyl)-thiazole + 4-amino-2-methyl-5-(diphosphooxymethyl)pyrimidine + H(+) = thiamine phosphate + diphosphate. The protein operates within cofactor biosynthesis; thiamine diphosphate biosynthesis; thiamine phosphate from 4-amino-2-methyl-5-diphosphomethylpyrimidine and 4-methyl-5-(2-phosphoethyl)-thiazole: step 1/1. Functionally, condenses 4-methyl-5-(beta-hydroxyethyl)thiazole monophosphate (THZ-P) and 2-methyl-4-amino-5-hydroxymethyl pyrimidine pyrophosphate (HMP-PP) to form thiamine monophosphate (TMP). The protein is Thiamine-phosphate synthase of Pyrococcus horikoshii (strain ATCC 700860 / DSM 12428 / JCM 9974 / NBRC 100139 / OT-3).